Consider the following 88-residue polypeptide: UPF0335 protein Mnod_5968 (88 aa).

The protein belongs to the UPF0335 family.

The protein is UPF0335 protein Mnod_5968 of Methylobacterium nodulans (strain LMG 21967 / CNCM I-2342 / ORS 2060).